The primary structure comprises 493 residues: Rop guanine nucleotide exchange factor 10 (493 aa).

Disordered regions lie at residues 1 to 45 and 400 to 423; these read MFDG…RSDM and GEAE…VVAA. The span at 17 to 27 shows a compositional bias: basic and acidic residues; sequence DGMHTPEHELA. Residues 35–401 enclose the PRONE domain; it reads RRGKQNRRSD…RLVQRQLMGE (367 aa).

Guanine-nucleotide exchange factor (GEF) that acts as an activator of Rop (Rho of plants) GTPases by promoting the exchange of GDP for GTP. The sequence is that of Rop guanine nucleotide exchange factor 10 (ROPGEF10) from Arabidopsis thaliana (Mouse-ear cress).